Consider the following 464-residue polypeptide: ATP synthase subunit beta (464 aa).

150–157 (GGAGVGKT) is an ATP binding site.

Belongs to the ATPase alpha/beta chains family. As to quaternary structure, F-type ATPases have 2 components, CF(1) - the catalytic core - and CF(0) - the membrane proton channel. CF(1) has five subunits: alpha(3), beta(3), gamma(1), delta(1), epsilon(1). CF(0) has three main subunits: a(1), b(2) and c(9-12). The alpha and beta chains form an alternating ring which encloses part of the gamma chain. CF(1) is attached to CF(0) by a central stalk formed by the gamma and epsilon chains, while a peripheral stalk is formed by the delta and b chains.

It localises to the cell membrane. The enzyme catalyses ATP + H2O + 4 H(+)(in) = ADP + phosphate + 5 H(+)(out). Its function is as follows. Produces ATP from ADP in the presence of a proton gradient across the membrane. The catalytic sites are hosted primarily by the beta subunits. This chain is ATP synthase subunit beta, found in Dehalococcoides mccartyi (strain ATCC BAA-2266 / KCTC 15142 / 195) (Dehalococcoides ethenogenes (strain 195)).